Here is a 141-residue protein sequence, read N- to C-terminus: Large ribosomal subunit protein uL11 (141 aa).

The protein belongs to the universal ribosomal protein uL11 family. Part of the ribosomal stalk of the 50S ribosomal subunit. Interacts with L10 and the large rRNA to form the base of the stalk. L10 forms an elongated spine to which L12 dimers bind in a sequential fashion forming a multimeric L10(L12)X complex. Post-translationally, one or more lysine residues are methylated.

Its function is as follows. Forms part of the ribosomal stalk which helps the ribosome interact with GTP-bound translation factors. In Streptococcus suis (strain 98HAH33), this protein is Large ribosomal subunit protein uL11.